Here is a 592-residue protein sequence, read N- to C-terminus: MIDLSTMKQQIETLLNQAIERLKTKGVLKPEVTPVIKITHTTDPQHGDFATNLALTLSKAAGMSPHALAEKIVEALPPSGQITEVEIAGPGFINFFVTEGSYQTVVSSILKAGKDYGRSEMGKGQRVHMEYVSANPTGPLHVGHGRGAAYGACVANLLNAAGFEVHREYYVNDAGRQMGILALSVWVRYLQGYEASIELPKNAYQGEYIIDIAEALKAKYGKQFYHSVESIQAKIPEEIDSNADPEAYLDAWVTAQKDLLGPKDFECVFQAALDSILNDIKNDLEEFSVTYDDWFPESRLVREGLIQEGLDLLTKHGYVYEKNGAQWFRATALGDEKDRVLFRKNGLPTYFAADVAYHLHKFNQGYDQIIDIFGADHHGYIPRIRGFLKGLGKAPEKLHILLVQFAILYRGNEKVSMSTRGGTFVTLRELRHEVGNDAARFFYIMRKPDQHLDFDLELAKSQSNENPVYYIQYAHARICSVFRQLKTTQKNWDRPRGMENLSLLSTNHEKELLATLGRYPEVIKRAAMNYAPHLLAHYLQTLANQFHTYYNAERFLIEDDNLRNARLNLINAVQQIIRNGLTLLGVSAPEEM.

The 'HIGH' region signature appears at 134–144 (ANPTGPLHVGH).

It belongs to the class-I aminoacyl-tRNA synthetase family. As to quaternary structure, monomer.

Its subcellular location is the cytoplasm. The enzyme catalyses tRNA(Arg) + L-arginine + ATP = L-arginyl-tRNA(Arg) + AMP + diphosphate. In Coxiella burnetii (strain CbuK_Q154) (Coxiella burnetii (strain Q154)), this protein is Arginine--tRNA ligase.